The sequence spans 196 residues: DnaA initiator-associating protein DiaA (196 aa).

The region spanning 34–196 (MVQSLLNGNK…DNTLFPHQDD (163 aa)) is the SIS domain.

Belongs to the SIS family. DiaA subfamily. Homotetramer; dimer of dimers.

In terms of biological role, required for the timely initiation of chromosomal replication via direct interactions with the DnaA initiator protein. This Photorhabdus laumondii subsp. laumondii (strain DSM 15139 / CIP 105565 / TT01) (Photorhabdus luminescens subsp. laumondii) protein is DnaA initiator-associating protein DiaA.